Here is an 850-residue protein sequence, read N- to C-terminus: Protein argonaute 8 (850 aa).

The disordered stretch occupies residues 1–30 (MDTTLPPPQHMEREPLKSKSSLLPMTRRGN). The region spanning 247 to 361 (PVVDFLIANQ…FPIELCELVS (115 aa)) is the PAZ domain. The 294-residue stretch at 518–811 (QSILGEVPPK…AAAQMATAMK (294 aa)) folds into the Piwi domain.

Belongs to the argonaute family. Ago subfamily.

Involved in RNA-mediated post-transcriptional gene silencing (PTGS). Main component of the RNA-induced silencing complex (RISC) that binds to a short guide RNA such as a microRNA (miRNA) or small interfering RNA (siRNA). RISC uses the mature miRNA or siRNA as a guide for slicer-directed cleavage of homologous mRNAs to repress gene expression. The sequence is that of Protein argonaute 8 (AGO8) from Arabidopsis thaliana (Mouse-ear cress).